Consider the following 444-residue polypeptide: Cytokine receptor-like factor 3 (444 aa).

The stretch at 1-65 forms a coiled coil; sequence MSIEAEALLQ…QELQTAVSRL (65 aa). The Fibronectin type-III domain maps to 177–270; that stretch reads PPVQIEELVE…PQTGYTTLAP (94 aa).

It belongs to the cytokine receptor-like factor 3 family.

Its subcellular location is the cytoplasm. Its function is as follows. May play a role in the negative regulation of cell cycle progression. The sequence is that of Cytokine receptor-like factor 3 (crlf3) from Danio rerio (Zebrafish).